The sequence spans 743 residues: ABC-type transporter claG (743 aa).

Asn4 and Asn30 each carry an N-linked (GlcNAc...) asparagine glycan. Residues 124 to 144 (SILLDIFLVIVVSWPFPFAWI) form a helical membrane-spanning segment. Asn159 carries N-linked (GlcNAc...) asparagine glycosylation. In terms of domain architecture, ABC transporter spans 200-439 (VEFSGISMRP…FQDAGYTFPL (240 aa)). 234–241 (GPSGSGKS) lines the ATP pocket. 5 consecutive transmembrane segments (helical) span residues 507–527 (YPSF…IGLS), 560–580 (GMLL…KTFG), 611–631 (IFLS…PIVS), 636–656 (LIVN…ISAI), and 661–681 (NGPL…GCAP).

The protein belongs to the ABC transporter superfamily. ABCG family.

Its subcellular location is the membrane. Functionally, ABC-type transporter; part of the cla gene cluster that produces clavatol and ortho-quinone methide. The clavatol biosynthesis cluster cla and the terrestric acid cluster tra are both involved in the production of peniphenones and penilactones. The chain is ABC-type transporter claG from Penicillium crustosum (Blue mold fungus).